A 220-amino-acid chain; its full sequence is Large ribosomal subunit protein uL1 (220 aa).

Belongs to the universal ribosomal protein uL1 family. As to quaternary structure, part of the 50S ribosomal subunit.

Its function is as follows. Binds directly to 23S rRNA. The L1 stalk is quite mobile in the ribosome, and is involved in E site tRNA release. Functionally, protein L1 is also a translational repressor protein, it controls the translation of the L11 operon by binding to its mRNA. In Ehrlichia chaffeensis (strain ATCC CRL-10679 / Arkansas), this protein is Large ribosomal subunit protein uL1.